The chain runs to 438 residues: 23S rRNA (uracil(1939)-C(5))-methyltransferase RlmD (438 aa).

The TRAM domain maps to 11–69 (LQPESKHQQVLVEKLDHQGAGIAYLNKKPLFIDGTLPGEEVVTQLTESKSKFARGKLIK). The [4Fe-4S] cluster site is built by cysteine 82, cysteine 88, cysteine 91, and cysteine 169. Positions 272, 301, 306, 322, 349, and 370 each coordinate S-adenosyl-L-methionine. Catalysis depends on cysteine 396, which acts as the Nucleophile.

It belongs to the class I-like SAM-binding methyltransferase superfamily. RNA M5U methyltransferase family. RlmD subfamily.

The enzyme catalyses uridine(1939) in 23S rRNA + S-adenosyl-L-methionine = 5-methyluridine(1939) in 23S rRNA + S-adenosyl-L-homocysteine + H(+). Catalyzes the formation of 5-methyl-uridine at position 1939 (m5U1939) in 23S rRNA. This is 23S rRNA (uracil(1939)-C(5))-methyltransferase RlmD from Vibrio vulnificus (strain YJ016).